The following is a 181-amino-acid chain: Adenylate kinase (181 aa).

ATP is bound at residue 10 to 15 (GAGKGT). The interval 30 to 59 (STGELFRKNIQDGTKLGIEAKRYLDAGDLV) is NMP. AMP-binding positions include Thr-31, Arg-36, 57-59 (DLV), 85-88 (GYPR), and Gln-92. Positions 126-132 (GRGRADD) are LID. Arg-127 serves as a coordination point for ATP. AMP is bound by residues Arg-129 and Arg-140. ATP is bound at residue Gly-166.

Belongs to the adenylate kinase family. In terms of assembly, monomer.

It localises to the cytoplasm. It catalyses the reaction AMP + ATP = 2 ADP. The protein operates within purine metabolism; AMP biosynthesis via salvage pathway; AMP from ADP: step 1/1. Functionally, catalyzes the reversible transfer of the terminal phosphate group between ATP and AMP. Plays an important role in cellular energy homeostasis and in adenine nucleotide metabolism. This is Adenylate kinase from Mycobacterium marinum (strain ATCC BAA-535 / M).